Here is a 160-residue protein sequence, read N- to C-terminus: SsrA-binding protein (160 aa).

This sequence belongs to the SmpB family.

It localises to the cytoplasm. Required for rescue of stalled ribosomes mediated by trans-translation. Binds to transfer-messenger RNA (tmRNA), required for stable association of tmRNA with ribosomes. tmRNA and SmpB together mimic tRNA shape, replacing the anticodon stem-loop with SmpB. tmRNA is encoded by the ssrA gene; the 2 termini fold to resemble tRNA(Ala) and it encodes a 'tag peptide', a short internal open reading frame. During trans-translation Ala-aminoacylated tmRNA acts like a tRNA, entering the A-site of stalled ribosomes, displacing the stalled mRNA. The ribosome then switches to translate the ORF on the tmRNA; the nascent peptide is terminated with the 'tag peptide' encoded by the tmRNA and targeted for degradation. The ribosome is freed to recommence translation, which seems to be the essential function of trans-translation. This chain is SsrA-binding protein, found in Cronobacter sakazakii (strain ATCC BAA-894) (Enterobacter sakazakii).